Reading from the N-terminus, the 379-residue chain is Protein RecA (379 aa).

The interval 1-23 (MSVDVKSAQSSKSDSLQVEPRPG) is disordered. Residues 7-16 (SAQSSKSDSL) are compositionally biased toward polar residues. 84–91 (GPESSGKT) lines the ATP pocket.

Belongs to the RecA family.

Its subcellular location is the cytoplasm. Can catalyze the hydrolysis of ATP in the presence of single-stranded DNA, the ATP-dependent uptake of single-stranded DNA by duplex DNA, and the ATP-dependent hybridization of homologous single-stranded DNAs. It interacts with LexA causing its activation and leading to its autocatalytic cleavage. In Prochlorococcus marinus (strain MIT 9313), this protein is Protein RecA.